The following is a 385-amino-acid chain: 3-hydroxyisobutyryl-CoA hydrolase, mitochondrial (385 aa).

The substrate site is built by Glu-120, Gly-145, Glu-168, and Asp-176.

It belongs to the enoyl-CoA hydratase/isomerase family.

The protein localises to the mitochondrion. It catalyses the reaction 3-hydroxy-2-methylpropanoyl-CoA + H2O = 3-hydroxy-2-methylpropanoate + CoA + H(+). The protein operates within amino-acid degradation; L-valine degradation. Hydrolyzes 3-hydroxyisobutyryl-CoA (HIBYL-CoA), a saline catabolite. Has high activity toward isobutyryl-CoA. Could be an isobutyryl-CoA dehydrogenase that functions in valine catabolism. Also hydrolyzes 3-hydroxypropanoyl-CoA. The chain is 3-hydroxyisobutyryl-CoA hydrolase, mitochondrial (HIBCH) from Gallus gallus (Chicken).